Consider the following 839-residue polypeptide: Toll-like receptor 4 (839 aa).

The signal sequence occupies residues 1-23 (MMSASRLAGTLIPAMAFLSCVRP). The Extracellular segment spans residues 24–631 (ESWEPCVEVV…SLNITCQMNK (608 aa)). A disulfide bridge links Cys-29 with Cys-40. Asn-35 carries N-linked (GlcNAc...) asparagine glycosylation. LRR repeat units follow at residues 55 to 76 (STKN…SFFS), 79 to 100 (ELQV…AYQS), 103 to 124 (HLST…AFSG), 127 to 148 (SLQK…PIGH), and 151 to 172 (TLKE…EYFS). Asn-173 carries an N-linked (GlcNAc...) asparagine glycan. 3 LRR repeats span residues 176–199 (NLEH…RVLH), 205–225 (NLSL…AFKE), and 227–247 (RLHK…KTCI). Residue Asn-205 is glycosylated (N-linked (GlcNAc...) asparagine). Cys-281 and Cys-306 are disulfide-bonded. Asn-282 and Asn-309 each carry an N-linked (GlcNAc...) asparagine glycan. LRR repeat units lie at residues 331-351 (GWQH…LKLK), 352-373 (SLKR…VDLP), 374-394 (SLEF…CSQS), 400-422 (SLKY…LGLE), 423-444 (QLEH…SVFL), 448-456 (NLIYLDISH), 472-495 (SLEV…FTEL), 497-518 (NLTF…AFNS), 521-542 (SLQV…PYKC), and 545-565 (SLQV…QELQ). Cysteines 390 and 391 form a disulfide. N-linked (GlcNAc...) asparagine glycosylation is found at Asn-497 and Asn-526. Asn-575 carries an N-linked (GlcNAc...) asparagine glycan. In terms of domain architecture, LRRCT spans 579-629 (NDFACTCEHQSFLQWIKDQRQLLVEVERMECATPSDKQGMPVLSLNITCQM). Disulfide bonds link Cys-583–Cys-609 and Cys-585–Cys-627. Asn-624 and Asn-630 each carry an N-linked (GlcNAc...) asparagine glycan. A helical membrane pass occupies residues 632–652 (TIIGVSVLSVLVVSVVAVLVY). Topologically, residues 653–839 (KFYFHLMLLA…GCNWQEATSI (187 aa)) are cytoplasmic. Positions 672-815 (NIYDAFVIYS…IFWRRLRKAL (144 aa)) constitute a TIR domain.

Belongs to the Toll-like receptor family. In terms of assembly, belongs to the lipopolysaccharide (LPS) receptor, a multi-protein complex containing at least CD14, LY96 and TLR4. Binding to bacterial LPS leads to homodimerization. Interacts with LY96 via the extracellular domain. Interacts with MYD88. Interacts (via TIR domains) with TIRAP. Interacts with TICAM2. Interacts with NOX4. Interacts with CNPY3. Interacts with HSP90B1. The interaction with both CNPY3 and HSP90B1 is required for proper folding in the endoplasmic reticulum. Interacts with MAP3K21; this interaction leads to negative regulation of TLR4 signaling. Interacts with CD36, following CD36 stimulation by oxLDL or amyloid-beta 42, and forms a heterodimer with TLR6. The trimeric complex is internalized and triggers inflammatory response. LYN kinase activity facilitates TLR4-TLR6 heterodimerization and signal initiation. Interacts with TICAM1 in response to LPS in a WDFY1-dependent manner. Interacts with WDFY1 in response to LPS. Interacts with SMPDL3B. Interacts with CEACAM1; upon lipopolysaccharide stimulation, forms a complex including TLR4 and the phosphorylated form of SYK and CEACAM1, which in turn, recruits PTPN6 that dephosphorylates SYK, reducing the production of reactive oxygen species (ROS) and lysosome disruption, which in turn, reduces the activity of the inflammasome. Interacts with RFTN1; the interaction occurs in response to lipopolysaccharide stimulation. Interacts with SCIMP; the interaction occurs in response to lipopolysaccharide stimulation and is enhanced by phosphorylation of SCIMP by LYN. This interaction facilitates the phosphorylation of TLR4 by LYN which elicits a selective cytokine response in macrophages. Interacts with TRAF3IP3. Interacts with TREM1; this interaction enhances TLR4-mediated inflammatory response. Interacts with ZG16B/PAUF. Interacts with CD82; this interaction inhibits TLR4-mediated signaling pathway. Interacts with neutrophil recruitment protein from Aedes aegypti saliva; the interaction probably promotes activation of canonical NF-kappa-B signaling in skin-resident macrophages and subsequent expression of neutrophil chemoattractants. As to quaternary structure, (Microbial infection) In case of infection, interacts with uropathogenic E.coli protein TcpC. (Microbial infection) In case of infection, interacts with B.melitensis protein TcpB; TcpB abolishes the TLR4-TIRAP interaction in vitro. In terms of assembly, (Microbial infection) Interacts with ebolavirus protein GP; this interaction leads to the production of proinflammatory cytokines and suppressor of cytokine signaling 1/SOCS1. N-Glycosylation of Asn-526 and Asn-575 by STT3A-containing OST-A complex is necessary for the expression of TLR4 on the cell surface and the LPS-response. Likewise, mutants lacking two or more of the other N-glycosylation sites were deficient in interaction with LPS. In terms of processing, phosphorylated on tyrosine residues by LYN after binding lipopolysaccharide. Post-translationally, ubiquitinated by RNF128 via 'Lys-28'-linked polyubiquitin chains, leading to proteasomal degradation. As to expression, highly expressed in placenta, spleen and peripheral blood leukocytes. Detected in monocytes, macrophages, dendritic cells and several types of T-cells. Expressed in pancreatic cancer cells but not in normal pancreatic cells (at protein level).

It localises to the cell membrane. The protein resides in the early endosome. Its subcellular location is the cell projection. The protein localises to the ruffle. In terms of biological role, transmembrane receptor that functions as a pattern recognition receptor recognizing pathogen- and damage-associated molecular patterns (PAMPs and DAMPs) to induce innate immune responses via downstream signaling pathways. At the plasma membrane, cooperates with LY96 to mediate the innate immune response to bacterial lipopolysaccharide (LPS). Also involved in LPS-independent inflammatory responses triggered by free fatty acids, such as palmitate, and Ni(2+). Mechanistically, acts via MYD88, TIRAP and TRAF6, leading to NF-kappa-B activation, cytokine secretion and the inflammatory response. Alternatively, CD14-mediated TLR4 internalization via endocytosis is associated with the initiation of a MYD88-independent signaling via the TICAM1-TBK1-IRF3 axis leading to type I interferon production. In addition to the secretion of proinflammatory cytokines, initiates the activation of NLRP3 inflammasome and formation of a positive feedback loop between autophagy and NF-kappa-B signaling cascade. In complex with TLR6, promotes inflammation in monocytes/macrophages by associating with TLR6 and the receptor CD86. Upon ligand binding, such as oxLDL or amyloid-beta 42, the TLR4:TLR6 complex is internalized and triggers inflammatory response, leading to NF-kappa-B-dependent production of CXCL1, CXCL2 and CCL9 cytokines, via MYD88 signaling pathway, and CCL5 cytokine, via TICAM1 signaling pathway. In myeloid dendritic cells, vesicular stomatitis virus glycoprotein G but not LPS promotes the activation of IRF7, leading to type I IFN production in a CD14-dependent manner. Required for the migration-promoting effects of ZG16B/PAUF on pancreatic cancer cells. This is Toll-like receptor 4 (TLR4) from Homo sapiens (Human).